Consider the following 1004-residue polypeptide: 2-oxoglutarate dehydrogenase E1 component (1004 aa).

It belongs to the alpha-ketoglutarate dehydrogenase family. Homodimer. Part of the 2-oxoglutarate dehydrogenase (OGDH) complex composed of E1 (2-oxoglutarate dehydrogenase), E2 (dihydrolipoamide succinyltransferase) and E3 (dihydrolipoamide dehydrogenase); the complex contains multiple copies of the three enzymatic components (E1, E2 and E3). The cofactor is thiamine diphosphate.

The catalysed reaction is N(6)-[(R)-lipoyl]-L-lysyl-[protein] + 2-oxoglutarate + H(+) = N(6)-[(R)-S(8)-succinyldihydrolipoyl]-L-lysyl-[protein] + CO2. In terms of biological role, E1 component of the 2-oxoglutarate dehydrogenase (OGDH) complex which catalyzes the decarboxylation of 2-oxoglutarate, the first step in the conversion of 2-oxoglutarate to succinyl-CoA and CO(2). In Brucella abortus (strain S19), this protein is 2-oxoglutarate dehydrogenase E1 component.